The following is a 163-amino-acid chain: 2-C-methyl-D-erythritol 2,4-cyclodiphosphate synthase (163 aa).

A divalent metal cation is bound by residues D10 and H12. 4-CDP-2-C-methyl-D-erythritol 2-phosphate contacts are provided by residues 10 to 12 and 36 to 37; these read DVH and HS. H44 contacts a divalent metal cation. 4-CDP-2-C-methyl-D-erythritol 2-phosphate-binding positions include 58–60, 63–67, 134–137, F141, and R144; these read DIG, FPDND, and TTTE.

It belongs to the IspF family. In terms of assembly, homotrimer. A divalent metal cation is required as a cofactor.

It catalyses the reaction 4-CDP-2-C-methyl-D-erythritol 2-phosphate = 2-C-methyl-D-erythritol 2,4-cyclic diphosphate + CMP. It functions in the pathway isoprenoid biosynthesis; isopentenyl diphosphate biosynthesis via DXP pathway; isopentenyl diphosphate from 1-deoxy-D-xylulose 5-phosphate: step 4/6. Involved in the biosynthesis of isopentenyl diphosphate (IPP) and dimethylallyl diphosphate (DMAPP), two major building blocks of isoprenoid compounds. Catalyzes the conversion of 4-diphosphocytidyl-2-C-methyl-D-erythritol 2-phosphate (CDP-ME2P) to 2-C-methyl-D-erythritol 2,4-cyclodiphosphate (ME-CPP) with a corresponding release of cytidine 5-monophosphate (CMP). This is 2-C-methyl-D-erythritol 2,4-cyclodiphosphate synthase from Carboxydothermus hydrogenoformans (strain ATCC BAA-161 / DSM 6008 / Z-2901).